Consider the following 355-residue polypeptide: Green-sensitive opsin-1 (355 aa).

Over 1-49 (MAAHADEPVFAARRYNEETTRESAFVYTNANNTRDPFEGPNYHIAPRWV) the chain is Extracellular. Residue asparagine 31 is glycosylated (N-linked (GlcNAc...) asparagine). A helical transmembrane segment spans residues 50–74 (YNLASLWMIIVVIASIFTNSLVIVA). Over 75 to 86 (TAKFKKLRHPLN) the chain is Cytoplasmic. The chain crosses the membrane as a helical span at residues 87 to 112 (WILVNLAIADLGETVLASTISVFNQV). Residues 113-126 (FGYFVLGHPMCIFE) lie on the Extracellular side of the membrane. The cysteines at positions 123 and 200 are disulfide-linked. The chain crosses the membrane as a helical span at residues 127–146 (GWTVSVCGITALWSLTIISW). Residues 147–165 (ERWVVVCKPFGNVKFDGKW) lie on the Cytoplasmic side of the membrane. The chain crosses the membrane as a helical span at residues 166–189 (AAGGIIFAWTWAIIWCTPPIFGWS). Residues 190–215 (RYWPHGLKTSCGPDVFSGSEDPGVAS) are Extracellular-facing. The chain crosses the membrane as a helical span at residues 216–243 (YMVTLLLTCCILPLSVIIICYIFVWNAI). Topologically, residues 244-265 (HQVAQQQKDSESTQKAEKEVSR) are cytoplasmic. The chain crosses the membrane as a helical span at residues 266–289 (MVVVMILAFILCWGPYASFATFSA). At 290–297 (LNPGYAWH) the chain is on the extracellular side. A helical membrane pass occupies residues 298–322 (PLAAALPAYFAKSATIYNPIIYVFM). Lysine 309 bears the N6-(retinylidene)lysine mark. Residues 323–355 (NRQFRSCIMQLFGKKVEDASEVSGSTTEVSTAS) are Cytoplasmic-facing.

It belongs to the G-protein coupled receptor 1 family. Opsin subfamily. The color pigments are found in the cone photoreceptor cells.

The protein localises to the membrane. Visual pigments are the light-absorbing molecules that mediate vision. They consist of an apoprotein, opsin, covalently linked to cis-retinal. In Psalidodon fasciatus (Banded astyanax), this protein is Green-sensitive opsin-1 (G103).